The primary structure comprises 211 residues: MDLSDIRREYIHGGLRRKDLQANPIDQFNLWLQQAIDANLSDPTAMTVATVDEHGQPFQRIVLLKNVDDVGFVFYTNLGSRKAQHIAHNNKISLHFPWHPLERQVHITGVAEKLTAMENMKYFMSRPKESQIAAIASHQSSRISARGVLEGKYLELKQKFANGEIPVPSFWGGYRIRPESLEFWQGGEHRLHDRFLYSRQDDNWTVDRLAP.

Substrate contacts are provided by residues 7–10 and Lys65; that span reads RREY. FMN is bound by residues 60–65, 75–76, Arg81, Lys82, and Gln104; these read RIVLLK and YT. Positions 122, 126, and 130 each coordinate substrate. Residues 139 to 140 and Trp184 contribute to the FMN site; that span reads QS. 190 to 192 serves as a coordination point for substrate; the sequence is RLH. An FMN-binding site is contributed by Arg194.

Belongs to the pyridoxamine 5'-phosphate oxidase family. Homodimer. The cofactor is FMN.

It carries out the reaction pyridoxamine 5'-phosphate + O2 + H2O = pyridoxal 5'-phosphate + H2O2 + NH4(+). The catalysed reaction is pyridoxine 5'-phosphate + O2 = pyridoxal 5'-phosphate + H2O2. Its pathway is cofactor metabolism; pyridoxal 5'-phosphate salvage; pyridoxal 5'-phosphate from pyridoxamine 5'-phosphate: step 1/1. The protein operates within cofactor metabolism; pyridoxal 5'-phosphate salvage; pyridoxal 5'-phosphate from pyridoxine 5'-phosphate: step 1/1. Functionally, catalyzes the oxidation of either pyridoxine 5'-phosphate (PNP) or pyridoxamine 5'-phosphate (PMP) into pyridoxal 5'-phosphate (PLP). This Vibrio cholerae serotype O1 (strain ATCC 39541 / Classical Ogawa 395 / O395) protein is Pyridoxine/pyridoxamine 5'-phosphate oxidase.